A 461-amino-acid chain; its full sequence is Putative forkhead-related transcription factor fkh-5 (461 aa).

Residues glutamine 171–threonine 262 constitute a DNA-binding region (fork-head).

The protein localises to the nucleus. Its function is as follows. Transcription factor. Binds to DNA sequence motif 5'-CTGTTTCA-3'. Regulates expression of a class of small RNAs, known as 21U-RNAs, perhaps acting redundantly with fkh-4 and fkh-3. In Caenorhabditis elegans, this protein is Putative forkhead-related transcription factor fkh-5 (fkh-5).